The following is a 135-amino-acid chain: Large ribosomal subunit protein uL16c (135 aa).

It belongs to the universal ribosomal protein uL16 family. As to quaternary structure, part of the 50S ribosomal subunit.

It is found in the plastid. The protein resides in the chloroplast. This is Large ribosomal subunit protein uL16c from Nandina domestica (Heavenly bamboo).